A 51-amino-acid polypeptide reads, in one-letter code: Large ribosomal subunit protein eL39 (51 aa).

The interval 1-22 is disordered; sequence MPSQKSFRTKQKLAKAQKQNRP.

Belongs to the eukaryotic ribosomal protein eL39 family. Interacts with YIH1.

The polypeptide is Large ribosomal subunit protein eL39 (RPL39) (Debaryomyces hansenii (strain ATCC 36239 / CBS 767 / BCRC 21394 / JCM 1990 / NBRC 0083 / IGC 2968) (Yeast)).